The sequence spans 250 residues: Probable transcriptional regulatory protein SAV_6832 (250 aa).

This sequence belongs to the TACO1 family.

It localises to the cytoplasm. The chain is Probable transcriptional regulatory protein SAV_6832 from Streptomyces avermitilis (strain ATCC 31267 / DSM 46492 / JCM 5070 / NBRC 14893 / NCIMB 12804 / NRRL 8165 / MA-4680).